A 128-amino-acid chain; its full sequence is Fumarate reductase subunit C (128 aa).

3 consecutive transmembrane segments (helical) span residues 31–51 (ATCI…ISLG), 67–87 (VVIL…TLYV), and 106–126 (ILKN…LVLV).

Belongs to the FrdC family. Part of an enzyme complex containing four subunits: a flavoprotein (FrdA), an iron-sulfur protein (FrdB), and two hydrophobic anchor proteins (FrdC and FrdD).

Its subcellular location is the cell inner membrane. In terms of biological role, anchors the catalytic components of the fumarate reductase complex to the cell membrane, binds quinones. In Haemophilus ducreyi (strain 35000HP / ATCC 700724), this protein is Fumarate reductase subunit C.